Reading from the N-terminus, the 94-residue chain is Large ribosomal subunit protein bL27 (94 aa).

Positions 1-9 are excised as a propeptide; sequence MLRLDLQFF.

It belongs to the bacterial ribosomal protein bL27 family. In terms of assembly, part of the 50S ribosomal subunit. In terms of processing, the N-terminus is cleaved by ribosomal processing cysteine protease Prp.

Plays a role in sporulation at high temperatures. The sequence is that of Large ribosomal subunit protein bL27 (rpmA) from Bacillus subtilis (strain 168).